Reading from the N-terminus, the 450-residue chain is Bifunctional protein GlmU (450 aa).

Residues 1-229 (MRRHAIILAA…VEEIMGVNDR (229 aa)) are pyrophosphorylase. UDP-N-acetyl-alpha-D-glucosamine contacts are provided by residues 8-11 (LAAG), Lys-22, Gln-72, and 77-78 (GT). Asp-102 is a binding site for Mg(2+). Gly-139, Glu-154, and Asn-227 together coordinate UDP-N-acetyl-alpha-D-glucosamine. Asn-227 lines the Mg(2+) pocket. Residues 230–250 (VMLSQAEKAMQRRTNHYHMLN) form a linker region. The segment at 251–450 (GVTIIDPDST…RQTTKEGYRK (200 aa)) is N-acetyltransferase. UDP-N-acetyl-alpha-D-glucosamine contacts are provided by Arg-332 and Lys-350. Catalysis depends on His-362, which acts as the Proton acceptor. Residues Tyr-365 and Asn-376 each contribute to the UDP-N-acetyl-alpha-D-glucosamine site. Acetyl-CoA contacts are provided by residues 385-386 (NY), Ala-422, and Arg-439.

It in the N-terminal section; belongs to the N-acetylglucosamine-1-phosphate uridyltransferase family. The protein in the C-terminal section; belongs to the transferase hexapeptide repeat family. In terms of assembly, homotrimer. Requires Mg(2+) as cofactor.

The protein localises to the cytoplasm. It catalyses the reaction alpha-D-glucosamine 1-phosphate + acetyl-CoA = N-acetyl-alpha-D-glucosamine 1-phosphate + CoA + H(+). It carries out the reaction N-acetyl-alpha-D-glucosamine 1-phosphate + UTP + H(+) = UDP-N-acetyl-alpha-D-glucosamine + diphosphate. It functions in the pathway nucleotide-sugar biosynthesis; UDP-N-acetyl-alpha-D-glucosamine biosynthesis; N-acetyl-alpha-D-glucosamine 1-phosphate from alpha-D-glucosamine 6-phosphate (route II): step 2/2. It participates in nucleotide-sugar biosynthesis; UDP-N-acetyl-alpha-D-glucosamine biosynthesis; UDP-N-acetyl-alpha-D-glucosamine from N-acetyl-alpha-D-glucosamine 1-phosphate: step 1/1. The protein operates within bacterial outer membrane biogenesis; LPS lipid A biosynthesis. Functionally, catalyzes the last two sequential reactions in the de novo biosynthetic pathway for UDP-N-acetylglucosamine (UDP-GlcNAc). The C-terminal domain catalyzes the transfer of acetyl group from acetyl coenzyme A to glucosamine-1-phosphate (GlcN-1-P) to produce N-acetylglucosamine-1-phosphate (GlcNAc-1-P), which is converted into UDP-GlcNAc by the transfer of uridine 5-monophosphate (from uridine 5-triphosphate), a reaction catalyzed by the N-terminal domain. This Staphylococcus aureus (strain USA300) protein is Bifunctional protein GlmU.